Consider the following 743-residue polypeptide: TSL-kinase interacting protein 1 (743 aa).

Residues 53 to 104 form the SANT domain; it reads RQWAAWTHQEEESFFTALRQVGKNFEKITSRVQSKNKDQVRHYYYRLVRRMN. Disordered stretches follow at residues 486–523 and 626–679; these read SGVH…PGEW and SPKG…TPCG. Over residues 488–499 the composition is skewed to basic and acidic residues; that stretch reads VHDRPARSRDDY.

In terms of assembly, interacts only with active kinase forms of TOUSLED. Interacts with SNL1. Post-translationally, phosphorylated in vitro by TOUSLED. As to expression, expressed in flowers, roots and leaves.

It is found in the nucleus. In Arabidopsis thaliana (Mouse-ear cress), this protein is TSL-kinase interacting protein 1 (TKI1).